Reading from the N-terminus, the 511-residue chain is Protein HESO1 (511 aa).

The interval 378 to 511 (ARPQNQQMQQ…GQIWRPRHEQ (134 aa)) is disordered. The segment covering 381-392 (QNQQMQQNWSQS) has biased composition (low complexity). A compositionally biased stretch (polar residues) spans 404 to 465 (LTQSRPQQNW…TSAGSSQNQG (62 aa)).

The protein belongs to the DNA polymerase type-B-like family.

It is found in the cytoplasm. Its subcellular location is the P-body. The protein resides in the nucleus. The catalysed reaction is RNA(n) + UTP = RNA(n)-3'-uridine ribonucleotide + diphosphate. With respect to regulation, completely inhibited by 2'-O-methylation on the substrate RNA. Functionally, uridylates small RNAs to trigger their degradation. Catalyzes the uridylation of 5' fragments produced by AGO1-mediated cleavage of miRNA target RNAs. Acts synergistically with URT1 in unmethylated miRNA uridylation, leading to their degradation. URT1 and HESO1 prefer substrates with different 3' end nucleotides and act cooperatively to tail different forms of the same miRNAs. URT1 and HESO1 act sequentially, with URT1 mono-uridylating the miRNAs followed by their further uridylation by HESO1. URT1 and HESO1 are involved in the uridylation and clearance of RISC-generated 5' mRNA fragments. Able to act on AGO1-bound miRNAs and the uridylated species stay associated with AGO1. This Arabidopsis thaliana (Mouse-ear cress) protein is Protein HESO1.